We begin with the raw amino-acid sequence, 310 residues long: tRNA pseudouridine synthase B (310 aa).

D47 (nucleophile) is an active-site residue.

This sequence belongs to the pseudouridine synthase TruB family. Type 1 subfamily.

It catalyses the reaction uridine(55) in tRNA = pseudouridine(55) in tRNA. In terms of biological role, responsible for synthesis of pseudouridine from uracil-55 in the psi GC loop of transfer RNAs. In Caulobacter sp. (strain K31), this protein is tRNA pseudouridine synthase B.